Reading from the N-terminus, the 228-residue chain is 7-cyano-7-deazaguanine synthase (228 aa).

Position 9–19 (9–19) interacts with ATP; that stretch reads YSGGLDSTTCM. Positions 189, 199, 202, and 205 each coordinate Zn(2+).

Belongs to the QueC family. Requires Zn(2+) as cofactor.

The catalysed reaction is 7-carboxy-7-deazaguanine + NH4(+) + ATP = 7-cyano-7-deazaguanine + ADP + phosphate + H2O + H(+). The protein operates within purine metabolism; 7-cyano-7-deazaguanine biosynthesis. In terms of biological role, catalyzes the ATP-dependent conversion of 7-carboxy-7-deazaguanine (CDG) to 7-cyano-7-deazaguanine (preQ(0)). This chain is 7-cyano-7-deazaguanine synthase, found in Geotalea uraniireducens (strain Rf4) (Geobacter uraniireducens).